The following is a 320-amino-acid chain: Cytochrome f (320 aa).

The N-terminal stretch at 1 to 35 (MQTRNTFSWIREEITRSISVSLMIYIITWASISSA) is a signal peptide. Residues tyrosine 36, cysteine 56, cysteine 59, and histidine 60 each coordinate heme. Residues 286–306 (VQGLLFFLGSVVLAQIFLVLK) form a helical membrane-spanning segment.

It belongs to the cytochrome f family. The 4 large subunits of the cytochrome b6-f complex are cytochrome b6, subunit IV (17 kDa polypeptide, petD), cytochrome f and the Rieske protein, while the 4 small subunits are PetG, PetL, PetM and PetN. The complex functions as a dimer. Requires heme as cofactor.

It is found in the plastid. The protein resides in the chloroplast thylakoid membrane. Functionally, component of the cytochrome b6-f complex, which mediates electron transfer between photosystem II (PSII) and photosystem I (PSI), cyclic electron flow around PSI, and state transitions. The sequence is that of Cytochrome f from Barbarea verna (Land cress).